The sequence spans 390 residues: Lissencephaly-1 homolog (390 aa).

One can recognise a LisH domain in the interval 7-39 (QREEINRAVAEYLQNNGYSEAFNMLLKEASLSE). Residues 54-80 (TTVLRLQRKVNDLEAKLLESQQEINHG) are a coiled coil. WD repeat units lie at residues 104–145 (GHRL…KTLK), 146–185 (GHTD…DCLK), 189–228 (GHEH…CVFT), 231–270 (GHND…RNWY), 272–313 (EIMS…VIFT), 316–355 (AHEN…CMKA), and 358–390 (AHEH…WECR).

This sequence belongs to the WD repeat LIS1/nudF family.

It is found in the cytoplasm. It localises to the cytoskeleton. The protein localises to the microtubule organizing center. Its subcellular location is the centrosome. Its function is as follows. Positively regulates the activity of the minus-end directed microtubule motor protein dynein. May enhance dynein-mediated microtubule sliding by targeting dynein to the microtubule plus end. Required for several dynein- and microtubule-dependent processes. The chain is Lissencephaly-1 homolog from Caenorhabditis briggsae.